An 838-amino-acid chain; its full sequence is V-type proton ATPase 116 kDa subunit a 1 (838 aa).

At 1 to 388 (MGELFRSEEM…DAYGIGTYRE (388 aa)) the chain is on the cytoplasmic side. Phosphothreonine occurs at positions 250 and 360. Phosphotyrosine is present on tyrosine 364. A helical membrane pass occupies residues 389–407 (INPAPYTVITFPFLFAVMF). At 408-409 (GD) the chain is on the vacuolar side. A helical membrane pass occupies residues 410 to 426 (FGHGILMTLFAVWMVLR). The Cytoplasmic portion of the chain corresponds to 427–441 (ESRILSQKNENEMFS). A helical transmembrane segment spans residues 442–471 (MVFSGRYIILLMGLFSIYTGLIYNDCFSKS). Residues 472–535 (LNIFGSSWSV…ATNKLTFLNS (64 aa)) are Vacuolar-facing. A helical transmembrane segment spans residues 536–555 (FKMKMSVILGIIHMLFGVSL). Residues 556–573 (SLFNHIYFKKPLNIYFGF) are Cytoplasmic-facing. Residues 574 to 594 (IPEIIFMSSLFGYLVILIFYK) traverse the membrane as a helical segment. Topologically, residues 595 to 639 (WTAYDAHSSRNAPSLLIHFINMFLFSYPESGNAMLYSGQKGIQCF) are vacuolar. Residues 640–659 (LIVVAMLCVPWMLLFKPLIL) form a helical membrane-spanning segment. Over 660–725 (RHQYLRKKHL…DTMVHQAIHT (66 aa)) the chain is Cytoplasmic. The chain crosses the membrane as a helical span at residues 726–750 (IEYCLGCISNTASYLRLWALSLAHA). The Vacuolar portion of the chain corresponds to 751-771 (QLSEVLWTMVIHIGLHVRSLA). Residues 772–810 (GGLGLFFIFAAFATLTVAILLIMEGLSAFLHALRLHWVE) form a helical membrane-spanning segment. Over 811-838 (FQNKFYTGTGFKFLPFSFEHIREGKFDE) the chain is Cytoplasmic.

The protein belongs to the V-ATPase 116 kDa subunit family. V-ATPase is a heteromultimeric enzyme made up of two complexes: the ATP-hydrolytic V1 complex and the proton translocation V0 complex. The V1 complex consists of three catalytic AB heterodimers that form a heterohexamer, three peripheral stalks each consisting of EG heterodimers, one central rotor including subunits D and F, and the regulatory subunits C and H. The proton translocation complex V0 consists of the proton transport subunit a, a ring of proteolipid subunits c9c'', rotary subunit d, subunits e and f, and the accessory subunits ATP6AP1/Ac45 and ATP6AP2/PRR. Interacts with SPAAR. In terms of tissue distribution, expressed in brain (at protein level). As to expression, expressed in heart, kidney, liver, spleen, and to a lesser extent in brain.

It localises to the cytoplasmic vesicle. The protein localises to the clathrin-coated vesicle membrane. It is found in the secretory vesicle. Its subcellular location is the synaptic vesicle membrane. The protein resides in the melanosome. In terms of biological role, subunit of the V0 complex of vacuolar(H+)-ATPase (V-ATPase), a multisubunit enzyme composed of a peripheral complex (V1) that hydrolyzes ATP and a membrane integral complex (V0) that translocates protons. V-ATPase is responsible for the acidification of various organelles, such as lysosomes, endosomes, the trans-Golgi network, and secretory granules, including synaptic vesicles. In certain cell types, can be exported to the plasma membrane, where it is involved in the acidification of the extracellular environment. Required for assembly and activity of the vacuolar ATPase. Through its action on compartment acidification, plays an essential role in neuronal development in terms of integrity and connectivity of neurons. This is V-type proton ATPase 116 kDa subunit a 1 (Atp6v0a1) from Rattus norvegicus (Rat).